The following is a 243-amino-acid chain: Putative outer membrane protein RP075 (243 aa).

Residues Met1–Ala23 form the signal peptide.

It belongs to the OmpW/AlkL family.

The protein resides in the cell outer membrane. This Rickettsia prowazekii (strain Madrid E) protein is Putative outer membrane protein RP075.